A 258-amino-acid polypeptide reads, in one-letter code: Small ribosomal subunit protein uS15m (258 aa).

The N-terminal 57 residues, 1–57, are a transit peptide targeting the mitochondrion; the sequence is MLRAAWRALSSVRAQAVTRAPVPALRGGSSASLLSARCGLQPPSLLRAARAYAAVQK. The interval 229 to 258 is disordered; the sequence is KAAAAAAKKEKNEGVPENPSNAVPEKTQVN.

Belongs to the universal ribosomal protein uS15 family. Component of the mitochondrial ribosome small subunit (28S) which comprises a 12S rRNA and about 30 distinct proteins. Interacts with METTL17.

The protein localises to the mitochondrion matrix. The polypeptide is Small ribosomal subunit protein uS15m (Mrps15) (Mus musculus (Mouse)).